The following is a 279-amino-acid chain: Fatty-acid-binding protein 1 (279 aa).

Dodecanoate contacts are provided by Arg-103, Tyr-116, and Ser-183.

The protein belongs to the chalcone isomerase family. Expressed in developing cotyledons, young seedlings, roots, seeds, embryos, macrospores, preanthesis and tapetum. Restricted to developing and reproductive tissues.

The protein resides in the plastid. Its subcellular location is the chloroplast stroma. Its function is as follows. Fatty-acid-binding protein. Interacts preferentially with saturated fatty acid. May be involved in alpha-linolenic (C18:3) metabolism. This Arabidopsis thaliana (Mouse-ear cress) protein is Fatty-acid-binding protein 1 (FAP1).